We begin with the raw amino-acid sequence, 2944 residues long: Collagen alpha-1(VII) chain (2944 aa).

An N-terminal signal peptide occupies residues 1 to 24; the sequence is MRLRLLVAALCAAEILMGAPEVWA. The nonhelical region (NC1) stretch occupies residues 18 to 1254; that stretch reads GAPEVWAQPR…TGPCAVHCPK (1237 aa). One can recognise a VWFA 1 domain in the interval 39-212; it reads DIVFLLDGSS…SILRTLLPLI (174 aa). 9 Fibronectin type-III domains span residues 235 to 330, 331 to 417, 418 to 508, 511 to 598, 601 to 688, 689 to 776, 779 to 867, 870 to 957, and 959 to 1053; these read GPRD…TAKE, GLEL…TASS, VEQT…LEQL, PVMN…DPEA, VVPG…DPLG, PVRR…APEP, SVSK…PPAT, LLET…EPSH, and PSTE…SHGP. A glycan (N-linked (GlcNAc...) asparagine) is linked at asparagine 338. A glycan (N-linked (GlcNAc...) asparagine) is linked at asparagine 787. Residues 1055-1230 form the VWFA 2 domain; that stretch reads DVVFLLHATR…PGLDRAVSDL (176 aa). Residue asparagine 1110 is glycosylated (N-linked (GlcNAc...) asparagine). The short motif at 1171 to 1173 is the Cell attachment site element; that stretch reads RGD. The interrupted collagenous region stretch occupies residues 1255-1475; it reads GQKGEPGVTG…GLRGAPGMTG (221 aa). Positions 1255–2775 are triple-helical region; it reads GQKGEPGVTG…GPRGEKGEAA (1521 aa). 2 disordered regions span residues 1259 to 1934 and 1960 to 2773; these read EPGV…GSLP and SSGS…EKGE. Residues 1338 to 1352 show a composition bias toward low complexity; that stretch reads RGPQGPKGEPGEPGQ. The span at 1353 to 1363 shows a compositional bias: gly residues; that stretch reads ITGGGGPGFPG. 2 stretches are compositionally biased toward basic and acidic residues: residues 1397 to 1406 and 1439 to 1448; these read KGDKGDRGER and PGEKGEKGDC. Residues 1507 to 1518 show a composition bias toward low complexity; sequence PGAAGHPGVEGP. 3 stretches are compositionally biased toward basic and acidic residues: residues 1527 to 1536, 1627 to 1639, and 1666 to 1680; these read RRGEKGEPGR, RGRD…KGDE, and VGEK…EDGR. Pro residues predominate over residues 1813-1822; it reads PPGPPGPPGV. Basic and acidic residues-rich tracts occupy residues 1846–1855, 1862–1871, and 1968–1984; these read EDGRKGEKGD, EGPDGPKGER, and PERR…RGPP. A Cell attachment site motif is present at residues 2002-2004; that stretch reads RGD. Residues 2040 to 2049 are compositionally biased toward gly residues; it reads GRAGGSGEAG. The span at 2050–2068 shows a compositional bias: basic and acidic residues; it reads RPGERGERGEKGERGDQGR. A Cell attachment site motif is present at residues 2063 to 2065; that stretch reads RGD. The segment covering 2074 to 2083 has biased composition (pro residues); sequence LPGPPGPPGP. A compositionally biased stretch (basic and acidic residues) spans 2130-2140; it reads DVGEPGKRGHD. Residues proline 2158, proline 2167, proline 2176, and proline 2179 each carry the 4-hydroxyproline modification. Low complexity-rich tracts occupy residues 2182–2197, 2226–2241, 2279–2299, and 2306–2317; these read PGLA…SGLK, SGLV…PGQV, PKGE…PPGA, and PGDLAGALLGEP. Residues 2319 to 2335 are compositionally biased toward basic and acidic residues; that stretch reads AKGDRGLPGPRGEKGEA. The segment covering 2414 to 2427 has biased composition (low complexity); sequence ERGLAGPPGREGAP. Basic and acidic residues-rich tracts occupy residues 2462–2477 and 2525–2544; these read RGER…DGHP and AKGD…KGPR. Positions 2576–2594 are enriched in low complexity; sequence PKGEPGAAGIPGEPGAPGK. The Cell attachment site signature appears at 2601–2603; that stretch reads RGD. Residues 2615 to 2636 are compositionally biased toward basic and acidic residues; the sequence is LKGEKGIKGTCGRDGERGDKGE. 5-hydroxylysine is present on residues lysine 2616 and lysine 2622. A Cell attachment site motif is present at residues 2631 to 2633; the sequence is RGD. Proline 2655, proline 2658, and proline 2664 each carry 4-hydroxyproline. Over residues 2695 to 2704 the composition is skewed to gly residues; that stretch reads GPPGVGGFPG. A nonhelical region (NC2) region spans residues 2776–2944; that stretch reads LTEDDIRDFV…GVHSQKTGAA (169 aa). The region spanning 2879–2931 is the BPTI/Kunitz inhibitor domain; it reads CSLPLDEGSCTAYTLRWYHRAVPGGTACHPFVYGGCGGNANRFGTREACERRC. 3 disulfides stabilise this stretch: cysteine 2879–cysteine 2931, cysteine 2888–cysteine 2914, and cysteine 2906–cysteine 2927.

In terms of assembly, homotrimer. Interacts with MIA3/TANGO1; facilitating its loading into transport carriers and subsequent secretion. Prolines at the third position of the tripeptide repeating unit (G-X-Y) are hydroxylated in some or all of the chains.

The protein resides in the secreted. The protein localises to the extracellular space. It is found in the extracellular matrix. Its subcellular location is the basement membrane. Stratified squamous epithelial basement membrane protein that forms anchoring fibrils which may contribute to epithelial basement membrane organization and adherence by interacting with extracellular matrix (ECM) proteins such as type IV collagen. This chain is Collagen alpha-1(VII) chain, found in Mus musculus (Mouse).